A 398-amino-acid chain; its full sequence is 1-deoxy-D-xylulose 5-phosphate reductoisomerase (398 aa).

NADPH-binding residues include T11, G12, S13, I14, and N125. Residue K126 participates in 1-deoxy-D-xylulose 5-phosphate binding. E127 provides a ligand contact to NADPH. Mn(2+) is bound at residue D151. 1-deoxy-D-xylulose 5-phosphate-binding residues include S152, E153, S186, and H209. E153 is a Mn(2+) binding site. Position 215 (G215) interacts with NADPH. 1-deoxy-D-xylulose 5-phosphate is bound by residues S222, N227, K228, and E231. E231 provides a ligand contact to Mn(2+).

It belongs to the DXR family. Mg(2+) serves as cofactor. Requires Mn(2+) as cofactor.

It carries out the reaction 2-C-methyl-D-erythritol 4-phosphate + NADP(+) = 1-deoxy-D-xylulose 5-phosphate + NADPH + H(+). The protein operates within isoprenoid biosynthesis; isopentenyl diphosphate biosynthesis via DXP pathway; isopentenyl diphosphate from 1-deoxy-D-xylulose 5-phosphate: step 1/6. Functionally, catalyzes the NADPH-dependent rearrangement and reduction of 1-deoxy-D-xylulose-5-phosphate (DXP) to 2-C-methyl-D-erythritol 4-phosphate (MEP). This Acinetobacter baumannii (strain ACICU) protein is 1-deoxy-D-xylulose 5-phosphate reductoisomerase.